A 365-amino-acid chain; its full sequence is tRNA-specific 2-thiouridylase MnmA (365 aa).

ATP-binding positions include 6 to 13 and Leu-32; that span reads AMSGGVDS. Residue Cys-101 is the Nucleophile of the active site. An intrachain disulfide couples Cys-101 to Cys-199. Gly-125 contacts ATP. An interaction with tRNA region spans residues 149–151; it reads KDQ. Cys-199 (cysteine persulfide intermediate) is an active-site residue.

It belongs to the MnmA/TRMU family.

It localises to the cytoplasm. The enzyme catalyses S-sulfanyl-L-cysteinyl-[protein] + uridine(34) in tRNA + AH2 + ATP = 2-thiouridine(34) in tRNA + L-cysteinyl-[protein] + A + AMP + diphosphate + H(+). Its function is as follows. Catalyzes the 2-thiolation of uridine at the wobble position (U34) of tRNA, leading to the formation of s(2)U34. This is tRNA-specific 2-thiouridylase MnmA from Corynebacterium glutamicum (strain R).